The following is a 138-amino-acid chain: Putative ribonuclease VapC45 (138 aa).

Its function is as follows. Toxic component of a type II toxin-antitoxin (TA) system. An RNase. The cognate antitoxin is VapB45. This is Putative ribonuclease VapC45 from Mycobacterium tuberculosis (strain ATCC 25618 / H37Rv).